Here is a 71-residue protein sequence, read N- to C-terminus: MGRVRPRYIKSLGDKLLEMYPDRFTDSFEENKKAVAQLADIPSKRVRNRVAGYITRLVKRRKAQEKAEAAA.

Belongs to the eukaryotic ribosomal protein eS17 family.

The protein is Small ribosomal subunit protein eS17 of Pyrobaculum neutrophilum (strain DSM 2338 / JCM 9278 / NBRC 100436 / V24Sta) (Thermoproteus neutrophilus).